The chain runs to 401 residues: MSKRLFTSESVTEGHPDKICDAISDTILDAMLTEDPQARVAVETVVTTGLVHVVGEVRTSGYVEIPQLVRDTLKEIGFTSSDMGFDGTTCGVSVSIGAQSPEIGAGVDTSHEVRGSSSTDEDDRQGAGDQGLMFGYATNETPEYMPLPISVAHRLSRRLTEVRKEEIVTGLRPDGKTQVTFEYDDAGTPVRLDTVVISTQHDPERTQDELRELLSEHVVGHVLADESLKPFVTEDLNLLVNPSGSFILGGPAGDAGLTGRKIIVDTYGGMARHGGGAFSGKDPSKVDRSAAYATRWVAKNIVAAGLADRAEVQVAYAIGVARPVGLYVETFGTEKAPVEDIQRAVAEVFDLRPASILRELDLLRPIYAQTAAYGHFGRNDLDLPWERLDKVEELKKAVGGN.

ATP is bound at residue His-15. A Mg(2+)-binding site is contributed by Asp-17. Glu-43 is a K(+) binding site. L-methionine contacts are provided by Glu-56 and Gln-99. Positions Gln-99–Thr-109 are flexible loop. Positions Pro-101–Leu-132 are disordered. Residues Asp-174 to Lys-176, Asp-254, Arg-260 to Lys-261, Ala-277, and Lys-281 each bind ATP. Asp-254 is an L-methionine binding site. Residue Lys-285 coordinates L-methionine.

Belongs to the AdoMet synthase family. In terms of assembly, homotetramer; dimer of dimers. Mg(2+) is required as a cofactor. K(+) serves as cofactor.

It localises to the cytoplasm. It catalyses the reaction L-methionine + ATP + H2O = S-adenosyl-L-methionine + phosphate + diphosphate. The protein operates within amino-acid biosynthesis; S-adenosyl-L-methionine biosynthesis; S-adenosyl-L-methionine from L-methionine: step 1/1. In terms of biological role, catalyzes the formation of S-adenosylmethionine (AdoMet) from methionine and ATP. The overall synthetic reaction is composed of two sequential steps, AdoMet formation and the subsequent tripolyphosphate hydrolysis which occurs prior to release of AdoMet from the enzyme. This Corynebacterium urealyticum (strain ATCC 43042 / DSM 7109) protein is S-adenosylmethionine synthase.